The chain runs to 293 residues: RNA pseudouridylate synthase domain-containing protein 1 (293 aa).

Residue Asp-67 is part of the active site.

This sequence belongs to the pseudouridine synthase RluA family.

This is RNA pseudouridylate synthase domain-containing protein 1 (rpusd1) from Danio rerio (Zebrafish).